Consider the following 443-residue polypeptide: Probable glycine dehydrogenase (decarboxylating) subunit 1 (443 aa).

This sequence belongs to the GcvP family. N-terminal subunit subfamily. The glycine cleavage system is composed of four proteins: P, T, L and H. In this organism, the P 'protein' is a heterodimer of two subunits.

It carries out the reaction N(6)-[(R)-lipoyl]-L-lysyl-[glycine-cleavage complex H protein] + glycine + H(+) = N(6)-[(R)-S(8)-aminomethyldihydrolipoyl]-L-lysyl-[glycine-cleavage complex H protein] + CO2. In terms of biological role, the glycine cleavage system catalyzes the degradation of glycine. The P protein binds the alpha-amino group of glycine through its pyridoxal phosphate cofactor; CO(2) is released and the remaining methylamine moiety is then transferred to the lipoamide cofactor of the H protein. In Nitratidesulfovibrio vulgaris (strain DP4) (Desulfovibrio vulgaris), this protein is Probable glycine dehydrogenase (decarboxylating) subunit 1.